The primary structure comprises 417 residues: Biofilm dispersion protein BdlA (417 aa).

A PAS 1 domain is found at 1–66 (MAALDRSMAR…RRFWERLRRG (66 aa)). The PAC 1 domain occupies 67–114 (EHFSGRCKRITREGRPLWLEATYNPVRDGQGRLLKVVKYASDIDAIVH). The 74-residue stretch at 115–188 (QEHEMQSKLD…ADLWRRLNRG (74 aa)) folds into the PAS 2 domain. The region spanning 191–241 (VTGQFRRVHRNGQPVWLEASYNPVYDADGKLYKVVKFASDVSDRMRRYQAE) is the PAC 2 domain. The region spanning 242–417 (ADNAHQAHTL…QFSRTLNADL (176 aa)) is the Methyl-accepting transducer domain.

Its function is as follows. Essential for biofilm dispersion by sensing environmental cues. May be involved in sensing and transducing signals within cells, resulting in the modulation of c-di-GMP levels, swimming motility and adhesiveness of the bacterial cell surface. This chain is Biofilm dispersion protein BdlA (bdlA), found in Pseudomonas aeruginosa (strain ATCC 15692 / DSM 22644 / CIP 104116 / JCM 14847 / LMG 12228 / 1C / PRS 101 / PAO1).